Here is a 420-residue protein sequence, read N- to C-terminus: Histidine--tRNA ligase (420 aa).

The protein belongs to the class-II aminoacyl-tRNA synthetase family. In terms of assembly, homodimer.

The protein resides in the cytoplasm. The catalysed reaction is tRNA(His) + L-histidine + ATP = L-histidyl-tRNA(His) + AMP + diphosphate + H(+). The polypeptide is Histidine--tRNA ligase (Nitrosomonas europaea (strain ATCC 19718 / CIP 103999 / KCTC 2705 / NBRC 14298)).